The primary structure comprises 232 residues: Membrane steroid-binding protein 1 (232 aa).

Residues 25 to 45 traverse the membrane as a helical segment; it reads AAFFTAVAAAAALYHVVSGIF. Disordered stretches follow at residues 48–77 and 172–232; these read PPPP…VSEE and TVPV…AKES. One can recognise a Cytochrome b5 heme-binding domain in the interval 71–170; sequence LGEVSEEELR…GKYVKVGTVK (100 aa). Positions 73–170 are steroid-binding; it reads EVSEEELRQY…GKYVKVGTVK (98 aa). Over residues 179 to 193 the composition is skewed to low complexity; sequence APSTSPETTETAAAA. The span at 194–219 shows a compositional bias: basic and acidic residues; it reads EPEKAPATEEKPREVSSEEVKEKEDA.

It belongs to the cytochrome b5 family. MAPR subfamily. As to quaternary structure, interacts with SERL2. In terms of tissue distribution, expressed in leaf sheaths, leaf blades and panicles.

It is found in the cell membrane. In terms of biological role, binds multiple steroid compounds. May act as a coreceptor with SERL2 and enhance its endocytosis. This is Membrane steroid-binding protein 1 from Oryza sativa subsp. japonica (Rice).